A 459-amino-acid chain; its full sequence is N(6)-adenosine-methyltransferase non-catalytic subunit METTL14 (459 aa).

Residues 50-73 form a disordered region; sequence TCRASYDTSAPNAKRKYPDEGEAD. 2 interaction with METTL3 regions span residues 135–136 and 237–238; these read RD and SG. The segment at 245-254 is positively charged region required for RNA-binding; that stretch reads RVCLRKWGYR. 2 interaction with METTL3 regions span residues 255-258 and 278-287; these read RCED and KAVFQRTKEH. The positively charged region required for RNA-binding stretch occupies residues 297–298; it reads RR. The segment at 308–312 is interaction with METTL3; the sequence is NVDID. Positions 392 to 459 are disordered; it reads IERLRPKSPP…GTHRGGFPTR (68 aa). Positions 409 to 423 are enriched in gly residues; that stretch reads GGGAPRGGGRGGTSA. The segment covering 425-443 has biased composition (basic and acidic residues); the sequence is RGERGRERNRTNFRGERGG. A compositionally biased stretch (gly residues) spans 444-453; sequence FRGGRGGTHR.

The protein belongs to the MT-A70-like family. Heterodimer; heterodimerizes with METTL3 to form an antiparallel heterodimer that constitutes an active methyltransferase. Component of the WMM complex, a N6-methyltransferase complex composed of a catalytic subcomplex, named MAC, and of an associated subcomplex, named MACOM. The MAC subcomplex is composed of METTL3 and METTL14.

Its subcellular location is the nucleus. The METTL3-METTL14 heterodimer forms a N6-methyltransferase complex that methylates adenosine residues at the N(6) position of some mRNAs and regulates the circadian clock, differentiation of embryonic stem cells and cortical neurogenesis. In the heterodimer formed with METTL3, METTL14 constitutes the RNA-binding scaffold that recognizes the substrate rather than the catalytic core. N6-methyladenosine (m6A), which takes place at the 5'-[AG]GAC-3' consensus sites of some mRNAs, plays a role in mRNA stability and processing. The chain is N(6)-adenosine-methyltransferase non-catalytic subunit METTL14 (METTL14) from Gallus gallus (Chicken).